A 269-amino-acid chain; its full sequence is 4-hydroxy-tetrahydrodipicolinate reductase (269 aa).

Residues 11 to 16 (GASGRM) and E37 each bind NAD(+). R38 contributes to the NADP(+) binding site. Residues 101–103 (GTT) and 125–128 (AGNM) each bind NAD(+). H158 serves as the catalytic Proton donor/acceptor. H159 is a (S)-2,3,4,5-tetrahydrodipicolinate binding site. The Proton donor role is filled by K162. (S)-2,3,4,5-tetrahydrodipicolinate is bound at residue 168 to 169 (GT).

It belongs to the DapB family.

It localises to the cytoplasm. It catalyses the reaction (S)-2,3,4,5-tetrahydrodipicolinate + NAD(+) + H2O = (2S,4S)-4-hydroxy-2,3,4,5-tetrahydrodipicolinate + NADH + H(+). It carries out the reaction (S)-2,3,4,5-tetrahydrodipicolinate + NADP(+) + H2O = (2S,4S)-4-hydroxy-2,3,4,5-tetrahydrodipicolinate + NADPH + H(+). Its pathway is amino-acid biosynthesis; L-lysine biosynthesis via DAP pathway; (S)-tetrahydrodipicolinate from L-aspartate: step 4/4. Its function is as follows. Catalyzes the conversion of 4-hydroxy-tetrahydrodipicolinate (HTPA) to tetrahydrodipicolinate. The chain is 4-hydroxy-tetrahydrodipicolinate reductase from Cereibacter sphaeroides (strain ATCC 17029 / ATH 2.4.9) (Rhodobacter sphaeroides).